A 91-amino-acid polypeptide reads, in one-letter code: Probable Fe(2+)-trafficking protein (91 aa).

This sequence belongs to the Fe(2+)-trafficking protein family.

In terms of biological role, could be a mediator in iron transactions between iron acquisition and iron-requiring processes, such as synthesis and/or repair of Fe-S clusters in biosynthetic enzymes. This Paraburkholderia phytofirmans (strain DSM 17436 / LMG 22146 / PsJN) (Burkholderia phytofirmans) protein is Probable Fe(2+)-trafficking protein.